The primary structure comprises 565 residues: Maturase K (565 aa).

This sequence belongs to the intron maturase 2 family. MatK subfamily.

It localises to the plastid. Its subcellular location is the chloroplast. Functionally, usually encoded in the trnK tRNA gene intron. Probably assists in splicing its own and other chloroplast group II introns. This Staurastrum punctulatum (Green alga) protein is Maturase K.